We begin with the raw amino-acid sequence, 360 residues long: C-X-C chemokine receptor type 2 (360 aa).

Residues 1 to 48 lie on the Extracellular side of the membrane; that stretch reads MEDFNMESDSFEDFWKGEDLSNYSYSSTLPPFLLDAAPCEPESLEINK. Asparagine 22 carries N-linked (GlcNAc...) asparagine glycosylation. The helical transmembrane segment at 49–75 threads the bilayer; that stretch reads YFVVIIYALVFLLSLLGNSLVMLVILY. The Cytoplasmic segment spans residues 76-84; the sequence is SRVGRSVTD. A helical membrane pass occupies residues 85–105; sequence VYLLNLALADLLFALTLPIWA. The Extracellular portion of the chain corresponds to 106–120; sequence ASKVNGWIFGTFLCK. Cysteines 119 and 196 form a disulfide. Residues 121–142 traverse the membrane as a helical segment; that stretch reads VVSLLKEVNFYSGILLLACISV. The Cytoplasmic portion of the chain corresponds to 143–163; that stretch reads DRYLAIVHATRTLTQKRYLVK. Residues 164 to 183 traverse the membrane as a helical segment; sequence FICLSIWGLSLLLALPVLLF. Over 184 to 208 the chain is Extracellular; sequence RRTVYSSNVSPACYEDMGNNTANWR. A helical membrane pass occupies residues 209–231; it reads MLLRILPQSFGFIVPLLIMLFCY. Topologically, residues 232-251 are cytoplasmic; sequence GFTLRTLFKAHMGQKHRAMR. Residues 252–273 form a helical membrane-spanning segment; the sequence is VIFAVVLIFLLCWLPYNLVLLA. Residues 274 to 294 are Extracellular-facing; the sequence is DTLMRTQVIQETCERRNHIDR. A helical transmembrane segment spans residues 295–315; that stretch reads ALDATEILGILHSCLNPLIYA. Over 316 to 360 the chain is Cytoplasmic; that stretch reads FIGQKFRHGLLKILAIHGLISKDSLPKDSRPSFVGSSSGHTSTTL. 4 positions are modified to phosphoserine: serine 347, serine 351, serine 352, and serine 353.

It belongs to the G-protein coupled receptor 1 family. In terms of assembly, interacts with IL8. Interacts with GNAI2. In terms of processing, phosphorylated upon ligand binding; which is required for desensitization. (Microbial infection) Proteolytically cleaved by Staphylococcus aureus staphopain A/SspP. This cleavage inhibits CXCR2-dependent neutrophil activation and chemotaxis.

The protein resides in the cell membrane. Receptor for interleukin-8 which is a powerful neutrophil chemotactic factor. Binding of IL-8 to the receptor causes activation of neutrophils. This response is mediated via a G-protein that activates a phosphatidylinositol-calcium second messenger system. Binds to IL-8 with high affinity. Also binds with high affinity to CXCL3, GRO/MGSA and NAP-2. This is C-X-C chemokine receptor type 2 (CXCR2) from Homo sapiens (Human).